We begin with the raw amino-acid sequence, 362 residues long: Chalcone synthase A (362 aa).

Residue C168 is part of the active site.

The protein belongs to the thiolase-like superfamily. Chalcone/stilbene synthases family.

The enzyme catalyses (E)-4-coumaroyl-CoA + 3 malonyl-CoA + 3 H(+) = 2',4,4',6'-tetrahydroxychalcone + 3 CO2 + 4 CoA. It participates in secondary metabolite biosynthesis; flavonoid biosynthesis. Its function is as follows. The primary product of this enzyme is 4,2',4',6'-tetrahydroxychalcone (also termed naringenin-chalcone or chalcone) which can under specific conditions spontaneously isomerize into naringenin. The chain is Chalcone synthase A (CHSA) from Ipomoea platensis (Morning glory).